The following is a 659-amino-acid chain: 4-alpha-glucanotransferase (659 aa).

The active-site Nucleophile is E123. D214 (proton donor) is an active-site residue.

It belongs to the glycosyl hydrolase 57 family. In terms of assembly, homodimer.

The catalysed reaction is Transfers a segment of a (1-&gt;4)-alpha-D-glucan to a new position in an acceptor, which may be glucose or a (1-&gt;4)-alpha-D-glucan.. With respect to regulation, inhibited by p-chloromercuribenzoic acid, monoiodoacetic acid, mercury and nickel ions. Functionally, catalyzes the transglycosylation of maltooligosaccharides, yielding maltooligosaccharides of various lengths and glucose. Maltose and glucose can be used as acceptors in the transfer reaction. The sequence is that of 4-alpha-glucanotransferase (jgt) from Thermococcus litoralis (strain ATCC 51850 / DSM 5473 / JCM 8560 / NS-C).